Here is a 603-residue protein sequence, read N- to C-terminus: Elongation factor 4 (603 aa).

In terms of domain architecture, tr-type G spans 7–191 (DNIRNFSIVA…AIVTRLPPPK (185 aa)). Residues 19–24 (DHGKST) and 138–141 (NKVD) contribute to the GTP site.

The protein belongs to the TRAFAC class translation factor GTPase superfamily. Classic translation factor GTPase family. LepA subfamily.

Its subcellular location is the cell inner membrane. It carries out the reaction GTP + H2O = GDP + phosphate + H(+). Its function is as follows. Required for accurate and efficient protein synthesis under certain stress conditions. May act as a fidelity factor of the translation reaction, by catalyzing a one-codon backward translocation of tRNAs on improperly translocated ribosomes. Back-translocation proceeds from a post-translocation (POST) complex to a pre-translocation (PRE) complex, thus giving elongation factor G a second chance to translocate the tRNAs correctly. Binds to ribosomes in a GTP-dependent manner. This is Elongation factor 4 from Rhodopseudomonas palustris (strain BisA53).